A 1140-amino-acid polypeptide reads, in one-letter code: Calcium-activated potassium channel slo-1 (1140 aa).

Topologically, residues 1 to 44 (MGEIYSPSQSKGFNQPYGYPMNCNLSRVFMEMTEEDRKCLEERK) are extracellular. A helical transmembrane segment spans residues 45–65 (YWCFLLSSITTFCASMILVVI). The Cytoplasmic segment spans residues 66-139 (WRVVTHLCCQ…LISGQSLTGR (74 aa)). A helical membrane pass occupies residues 140-161 (FLVLLVFILSIGSLIIYFYDAS). The Extracellular segment spans residues 162–178 (FQNFQVETCIPWQDSPS). Residues 179–199 (QQIDLGFNIFFLVYFFIRFIA) form a helical membrane-spanning segment. The Cytoplasmic segment spans residues 200 to 203 (ASDK). A helical transmembrane segment spans residues 204 to 224 (VWFLLEMYSWIDFFTIPPSFV). At 225–228 (AIYL) the chain is on the extracellular side. Residues 229–249 (QRNWLGFRFLRALRLMTVPDI) form a helical; Voltage-sensor membrane-spanning segment. The Cytoplasmic segment spans residues 250 to 264 (LQYLNILKTSSSIRL). Residues 265 to 285 (TQLVTIFVAVCLTGAGLVHLL) form a helical membrane-spanning segment. Topologically, residues 286–299 (ENSGDFFKGFINPH) are extracellular. Positions 300-322 (RITYADSVYFVLVTMSTVGYGDI) form an intramembrane region, pore-forming. The Selectivity for potassium motif lies at 316 to 319 (TVGY). The Extracellular portion of the chain corresponds to 323–331 (YCTTLCGRL). A helical membrane pass occupies residues 332-352 (FMIFFILFGLAMFASYVPEIA). The Cytoplasmic segment spans residues 353–1140 (DLIGNRQKYG…LEYEPGKRHF (788 aa)). The region spanning 371 to 514 (KKHIVVCGHI…DWKRGDDVIC (144 aa)) is the RCK N-terminal 1 domain. The interval 520-540 (LGFIAQSCLAPGFSTMMANLF) is segment S7. The segment S8 stretch occupies residues 578-598 (MTFPEAVDLLFNRLGLLLLAI). The segment at 797 to 817 (VLNGHVVVCLFADQDSPLIGL) is segment S9. The 155-residue stretch at 799–953 (NGHVVVCLFA…GAKFGTNVPM (155 aa)) folds into the RCK N-terminal 2 domain. The Calcium bowl signature appears at 955–977 (TELVNDSNVQFLDQDDDDDPDTE). Ca(2+)-binding residues include Gln964, Asp967, Asp970, and Asp972. Residues 984–1004 (FACGTAFAISVLDSLMSTTYF) form a segment S10 region.

The protein belongs to the potassium channel family. Calcium-activated (TC 1.A.1.3) subfamily. Slo sub-subfamily. In terms of assembly, homotetramer; which constitutes the calcium-activated potassium channel. In terms of processing, phosphorylated. In terms of tissue distribution, expressed in synaptic regions of the nervous system including in both the nerve ring and nerve cords, as well as in the body-wall and vulval muscle. Expressed broadly in motor neurons. Forms puncta at presynaptic terminals of neurons, muscle excitation sites, and in the dorsal nerve cord.

Its subcellular location is the cell membrane. The protein resides in the synapse. Potassium channel activated by both membrane depolarization or increase in cytosolic Ca(2+) that mediates export of K(+). Its activation dampens the excitatory events that elevate the cytosolic Ca(2+) concentration and/or depolarize the cell membrane. It therefore contributes to repolarization of the membrane potential. Essential for the regulation of neurotransmitter release at synapses. Regulates longevity and age-associated decline in motor activity in mid-late life, by acting in motor neurons and through daf-16 in the intestine. When clustered in neurons, mediates ethanol-induced suppression of locomotory and egg-laying behaviors. This chain is Calcium-activated potassium channel slo-1, found in Caenorhabditis elegans.